The primary structure comprises 768 residues: Ribonucleoside-diphosphate reductase large chain (768 aa).

ATP contacts are provided by residues 7–8 and 13–19; these read SK and EKLGIDL. GDP is bound by residues threonine 196 and serine 211. An intrachain disulfide couples cysteine 212 to cysteine 437. DTTP-binding positions include 220–222, lysine 237, and arginine 250; that span reads DSI. GDP is bound at residue asparagine 420. Catalysis depends on asparagine 420, which acts as the Proton acceptor. The active-site Cysteine radical intermediate is cysteine 422. Residue glutamate 424 participates in GDP binding. Residue glutamate 424 is the Proton acceptor of the active site.

This sequence belongs to the ribonucleoside diphosphate reductase large chain family. As to quaternary structure, heterodimer of a large and a small subunit.

It carries out the reaction a 2'-deoxyribonucleoside 5'-diphosphate + [thioredoxin]-disulfide + H2O = a ribonucleoside 5'-diphosphate + [thioredoxin]-dithiol. With respect to regulation, under complex allosteric control mediated by deoxynucleoside triphosphates and ATP binding to separate specificity and activation sites on the large subunit. The type of nucleotide bound at the specificity site determines substrate preference. It seems probable that ATP makes the enzyme reduce CDP and UDP, dGTP favors ADP reduction and dTTP favors GDP reduction. Stimulated by ATP and inhibited by dATP binding to the activity site. Provides the precursors necessary for DNA synthesis. Catalyzes the biosynthesis of deoxyribonucleotides from the corresponding ribonucleotides. This Encephalitozoon cuniculi (strain GB-M1) (Microsporidian parasite) protein is Ribonucleoside-diphosphate reductase large chain.